Reading from the N-terminus, the 842-residue chain is MutS protein homolog him-14 (842 aa).

Residues 1–21 (MYSNKSFQRRQRQQVAESRSE) form a disordered region. 588 to 595 (GPNMAGKS) contacts ATP.

This sequence belongs to the DNA mismatch repair MutS family. As to quaternary structure, heterooligomer of him-14 and msh-5.

The protein localises to the nucleus. Functionally, required during the pachytene stage of meiotic prophase for the formation of crossovers between homologous chromosomes. Together with msh-5 and zhp-3 plays a role in the activation of DNA damage-dependent apoptosis at the DNA damage checkpoint in pachytene cells. Not needed for pairing or synapsis. May promote crossing over by interfering with Holliday junction branch migration. Has no apparent role in DNA mismatch repair. The polypeptide is MutS protein homolog him-14 (Caenorhabditis elegans).